The primary structure comprises 324 residues: Olfactory receptor 7G2 (324 aa).

At 1–25 (MEARNQTAISKFLLLGLIEDPELQP) the chain is on the extracellular side. Asparagine 5 is a glycosylation site (N-linked (GlcNAc...) asparagine). The chain crosses the membrane as a helical span at residues 26–46 (VLFSLFLSMYLVTILGNLLIL). The Cytoplasmic segment spans residues 47–54 (LAVISDSH). A helical membrane pass occupies residues 55–75 (LHTPMYFFLSNLSFLDICLST). Topologically, residues 76 to 99 (TTIPKMLVNIQAQNRSITYSGCLT) are extracellular. Asparagine 89 carries N-linked (GlcNAc...) asparagine glycosylation. An intrachain disulfide couples cysteine 97 to cysteine 189. The helical transmembrane segment at 100 to 120 (QICFVLFFAGLENCLLAAMAY) threads the bilayer. Residues 121–139 (DRYVAICHPLRYTVIMNPR) lie on the Cytoplasmic side of the membrane. The chain crosses the membrane as a helical span at residues 140–160 (LCGLLILLSLLTSVVNALLLS). Residues 161-197 (LMVLRLSFCTDLEIPLFFCELAQVIQLTCSDTLINNI) are Extracellular-facing. A helical transmembrane segment spans residues 198-217 (LIYFAACIFGGVPLSGIILS). Topologically, residues 218 to 237 (YTQITSCVLRMPSASGKHKA) are cytoplasmic. The chain crosses the membrane as a helical span at residues 238–258 (VSTCGSHLSIVLLFYGAGLGV). The Extracellular segment spans residues 259 to 271 (YISSVVTDSPRKT). The helical transmembrane segment at 272–292 (AVASVMYSVFPQMVNPFIYSL) threads the bilayer. Residues 293 to 324 (RNKDMKGTLRKFIGRIPSLLWCAICFGFRFLE) lie on the Cytoplasmic side of the membrane.

This sequence belongs to the G-protein coupled receptor 1 family.

The protein resides in the cell membrane. Odorant receptor. The sequence is that of Olfactory receptor 7G2 (OR7G2) from Homo sapiens (Human).